A 233-amino-acid chain; its full sequence is 5'-methylthioadenosine/S-adenosylhomocysteine nucleosidase (233 aa).

The Proton acceptor role is filled by glutamate 12. Substrate-binding positions include glycine 78, isoleucine 153, and 174–175; that span reads ME. Aspartate 198 (proton donor) is an active-site residue.

The protein belongs to the PNP/UDP phosphorylase family. MtnN subfamily.

It carries out the reaction S-adenosyl-L-homocysteine + H2O = S-(5-deoxy-D-ribos-5-yl)-L-homocysteine + adenine. The catalysed reaction is S-methyl-5'-thioadenosine + H2O = 5-(methylsulfanyl)-D-ribose + adenine. It catalyses the reaction 5'-deoxyadenosine + H2O = 5-deoxy-D-ribose + adenine. It participates in amino-acid biosynthesis; L-methionine biosynthesis via salvage pathway; S-methyl-5-thio-alpha-D-ribose 1-phosphate from S-methyl-5'-thioadenosine (hydrolase route): step 1/2. Its function is as follows. Catalyzes the irreversible cleavage of the glycosidic bond in both 5'-methylthioadenosine (MTA) and S-adenosylhomocysteine (SAH/AdoHcy) to adenine and the corresponding thioribose, 5'-methylthioribose and S-ribosylhomocysteine, respectively. Also cleaves 5'-deoxyadenosine, a toxic by-product of radical S-adenosylmethionine (SAM) enzymes, into 5-deoxyribose and adenine. This is 5'-methylthioadenosine/S-adenosylhomocysteine nucleosidase from Exiguobacterium sp. (strain ATCC BAA-1283 / AT1b).